Reading from the N-terminus, the 497-residue chain is Lysine--tRNA ligase (497 aa).

Residues Glu-406 and Glu-413 each contribute to the Mg(2+) site.

This sequence belongs to the class-II aminoacyl-tRNA synthetase family. In terms of assembly, homodimer. Mg(2+) serves as cofactor.

It localises to the cytoplasm. It catalyses the reaction tRNA(Lys) + L-lysine + ATP = L-lysyl-tRNA(Lys) + AMP + diphosphate. This is Lysine--tRNA ligase from Rhizobium leguminosarum bv. trifolii (strain WSM2304).